The primary structure comprises 385 residues: tRNA-specific 2-thiouridylase MnmA (385 aa).

ATP contacts are provided by residues 18–25 (AMSGGVDS) and Leu-44. The Nucleophile role is filled by Cys-112. Cys-112 and Cys-209 are oxidised to a cystine. Gly-136 serves as a coordination point for ATP. The tract at residues 159 to 161 (RDQ) is interaction with tRNA. Cys-209 (cysteine persulfide intermediate) is an active-site residue.

Belongs to the MnmA/TRMU family.

It is found in the cytoplasm. The catalysed reaction is S-sulfanyl-L-cysteinyl-[protein] + uridine(34) in tRNA + AH2 + ATP = 2-thiouridine(34) in tRNA + L-cysteinyl-[protein] + A + AMP + diphosphate + H(+). Functionally, catalyzes the 2-thiolation of uridine at the wobble position (U34) of tRNA, leading to the formation of s(2)U34. This is tRNA-specific 2-thiouridylase MnmA from Methylorubrum extorquens (strain PA1) (Methylobacterium extorquens).